Consider the following 192-residue polypeptide: Fe/S biogenesis protein NfuA (192 aa).

Cys150 and Cys153 together coordinate [4Fe-4S] cluster.

It belongs to the NfuA family. As to quaternary structure, homodimer. It depends on [4Fe-4S] cluster as a cofactor.

Its function is as follows. Involved in iron-sulfur cluster biogenesis. Binds a 4Fe-4S cluster, can transfer this cluster to apoproteins, and thereby intervenes in the maturation of Fe/S proteins. Could also act as a scaffold/chaperone for damaged Fe/S proteins. The polypeptide is Fe/S biogenesis protein NfuA (Ruthia magnifica subsp. Calyptogena magnifica).